The primary structure comprises 934 residues: Sorting nexin-14 (934 aa).

2 helical membrane-spanning segments follow: residues 27–47 (YPVIFCIFTVMISSTIILNQY) and 48–68 (LHILMVFWSFLAGVITFYCSL). A PXA domain is found at 129-303 (PSKVDASISE…MVLIFIDDSP (175 aa)). In terms of domain architecture, RGS spans 335–467 (DLKEIREQQD…CHSDEYFRHL (133 aa)). Positions 557–677 (WTISIPYVDF…DFLSPFSMES (121 aa)) constitute a PX domain.

Belongs to the sorting nexin family.

It is found in the lysosome membrane. Its subcellular location is the late endosome membrane. The protein localises to the cell projection. The protein resides in the dendrite. Its function is as follows. Plays a role in maintaining normal neuronal excitability and synaptic transmission. May be involved in several stages of intracellular trafficking. Required for autophagosome clearance, possibly by mediating the fusion of lysosomes with autophagosomes. Binds phosphatidylinositol 3,5-bisphosphate (PtdIns(3,5)P2), a key component of late endosomes/lysosomes. Does not bind phosphatidylinositol 3-phosphate (PtdIns(3P)). In Danio rerio (Zebrafish), this protein is Sorting nexin-14.